The chain runs to 235 residues: MTLNSDYLNLLDLMQITNANFPIGTFSHSFGVETYIRKDIVFDGESLIKALLLYMNEQLLHGDLLAIYQIFKLLPKQKINAIWEIDQMINFQGLARETREGQRRIGQQMVKIYNELFNCELLVEYAERIKNKKSYGNPAVAFALLAMHLKIDLKTALYTHLYSTVAALTQNCVRAIPLGQVKGQKIIYQLKHVYFDDIVNKVFTLDFKTDFCKNIPGLEIAQMEHEDTPVRLFMS.

This sequence belongs to the UreF family. As to quaternary structure, ureD, UreF and UreG form a complex that acts as a GTP-hydrolysis-dependent molecular chaperone, activating the urease apoprotein by helping to assemble the nickel containing metallocenter of UreC. The UreE protein probably delivers the nickel.

The protein localises to the cytoplasm. Functionally, required for maturation of urease via the functional incorporation of the urease nickel metallocenter. This is Urease accessory protein UreF from Ureaplasma parvum serovar 3 (strain ATCC 27815 / 27 / NCTC 11736).